Reading from the N-terminus, the 1133-residue chain is DNA repair protein rad8 (1133 aa).

Disordered stretches follow at residues 1–34 (MKRKVQKIIDEAPLEENSPPRFFDSDVEADSKPN) and 392–413 (PEARDESNSDLTPSSTEDEEDV). Serine 18 is modified (phosphoserine). Residues 516–705 (PNSMPYHRGG…YSLIKFMRYE (190 aa)) enclose the Helicase ATP-binding domain. ATP is bound at residue 529–536 (DEMGLGKT). The DEGH box signature appears at 656-659 (DEGH). The RING-type zinc finger occupies 877–923 (CPICCNEPIQNPLLLNCKHACCGDCLSEHIQYQKRRNIIPPLCHTCR). A Helicase C-terminal domain is found at 971–1125 (QLRQLTHSSE…EGKQQVQSIE (155 aa)).

Belongs to the SNF2/RAD54 helicase family.

The protein resides in the cytoplasm. It localises to the nucleus. Its function is as follows. Probable helicase, member of the UBC2/RAD6 epistasis group. Functions with DNA repair protein rad18 in error-free postreplication DNA repair. Involved in the maintenance of wild-type rates of instability of simple repetitive sequences such as poly(GT) repeats. Plays a role in surviving topoisomerase-mediated DNA damage. In Schizosaccharomyces pombe (strain 972 / ATCC 24843) (Fission yeast), this protein is DNA repair protein rad8.